The primary structure comprises 58 residues: SPbeta prophage-derived uncharacterized protein YotN (58 aa).

The polypeptide is SPbeta prophage-derived uncharacterized protein YotN (yotN) (Bacillus subtilis (strain 168)).